A 942-amino-acid chain; its full sequence is MKIKILSAMIASSLLIGCVIPTVKASQSAIKSIETNRTITKVRTGMLSGGSSIITTSYEGTVAAYKFNGEKLWENELSGFMNHDIWVQDINGDGLVEIFAANADGNVYCINSDGSLKWTFGLNEVPMNSVTVISDADEKYVVAGGYDKNLYYISANGELLKTIESSAYSEEGVFGDGVKPEARTHTVNFVRPVKSSDGTEKLVVLGTNNSLQSSGRFYIFEPFADLPSEKSRISIKKGIGDLRTVDFDNDGNDELTLGNSAQIGDAAISVMNLDDLSQKKSQINDIARRIDRFGYRVAQTEVVMNEGTPTYLTLFGSRILLTPESFDVNDSEILANKYSYYDIWKDKSSNKLVLASAQSGGSQVHIIDTSNPSWKSAYEELEPQGKLAAIQENTREVERQLSNFQKPTRERAPLPVYFISESRNEIPATIERSESLYDSPVFLNYSTLPNVENWDRSEVLADNPKYRDKRDRRKNYTLSSEEMFNKLSAGYESSDGISQWAGHGNDPYMISLATMKRIISSGDGKKTVNIYPEIEGHGDAFNKVLNDHFYPLAEFSSENNANLFMRNKHTFWQSTIYAPEWSELRSGRLADAFVPAMEETTDKSMEMSVAGRMGLWAAGSVDNWGERYARDNPSFDRLRQHSHQMVPNHALRQIIYKIASGARYINNFGFNQEYMSLAWELIGKGALYVPKREELLSLSPVHISMKEPDPIYRETSNNVKWTTFYDEEKDSIPYVFSRLNGTWPGAKTLPWDYSNYAADTKERRLDFIPKFPKGLVLITPVQQGKFKDEGTVRGTLADNMHPIYKDIMKEYITDGKNYYNANGEQVMAADSVRYRQIKNKIEEKSNLLPMTVSGEAAWVVAQSARKHLRLTLVDSGYLNPSNKVAKVKFNSVTPVAIVDVLSGETFSPDSNGVVEIPVLAGAFRFIDVKITEDLRNMQSSTL.

The first 25 residues, 1 to 25 (MKIKILSAMIASSLLIGCVIPTVKA), serve as a signal peptide directing secretion.

In terms of assembly, monomer.

Its subcellular location is the secreted. The enzyme catalyses Endohydrolysis of (1-&gt;4)-beta-linkages in the backbone of lambda-carrageenan, resulting in the tetrasaccharide alpha-D-Galp2,6S2-(1-&gt;3)-beta-D-Galp2S-(1-&gt;4)-alpha-D-Galp2,6S2-(1-&gt;3)-D-Galp2S.. Functionally, hydrolyzes lambda-carrageenan with inversion of anomeric configuration. Does not hydrolyze iota- and kappa-carrageenans, agarose or porphyran. This chain is Lambda-carrageenase, found in Pseudoalteromonas sp.